Consider the following 1105-residue polypeptide: uncharacterized protein (1105 aa).

The protein belongs to the mycobacterial PPE family.

This is an uncharacterized protein from Mycobacterium tuberculosis (strain CDC 1551 / Oshkosh).